The sequence spans 759 residues: MDGIMKNDLLWFGNHVFDLTPNSFDSDFVEQLSKFEGKEGLKRKLFDSSEYFQNFSFQVNDDLLGKDVILDISNQQLTPAVPGCETSSNSKLISASKEITSERKRAKSSVSPSYLTDSSPSDLSVENKVLLTCPSWDGENFKNLEARSPFISEAPSRVYDYFLHNQDWSPKPLFSALQVYPLATIFNCVAGLPQGFESTVFPWNKTSSTFELDPTISVSGMSDECFASIVQKFSAIGGLIKKALNEFSLYKTNISFYLSNFIVNGVLQYRKEFQRWLRLYEFRRFGLIGLSNFVNSFSSFFELISHFLIKSAQNLKGDSLLDFLFDYARSCQNTISYPIALQCLIYCSNPYFKRLELALKVSCAYGHIDSSLFLSLPRFFPSELCVSIEQCIQFLSLIREQKEIFNKNNKEFINPLNIRFAYSFNDINQACVIEERCNFSSLSFGNLEQTSVNNDSEEFETLLAKMNMTPDFNDNLLQLKFTDDVRNVCPLNLNVCCCIAEPIQSFILSFLRSTYKVLKNDFQVFDLLNFFHSTFLFQNYEFSDNVISLLKSRRLDKSDRNELAEDLNSDDRYNFISRLKKFIFMEKEKNGLSRSLSKSITFTLDSASVSEFEDVYPDLQFQCQVIGALRILFTDNSLNYYSKTFSYVLHLFQAQSDFESSVELKDRSIVTKTTIMSWSKYQGTKESLFQFLSIYIPECMLPFTKLLKSIYSPDCPTNIQNSAIKNAASVHEQCTKAIYQKVKELFDTMKLWESSIKVS.

In terms of assembly, interacts with gamma-tubulin.

It localises to the cytoplasm. Its subcellular location is the cytoskeleton. The protein resides in the microtubule organizing center. It is found in the spindle pole body. In terms of biological role, component of the gamma tubule complex that is required for the regulation of both interphase microtubules and mitotic bipolar spindles. The chain is Spindle pole body component alp16 (alp16) from Schizosaccharomyces pombe (strain 972 / ATCC 24843) (Fission yeast).